The following is a 117-amino-acid chain: Large ribosomal subunit protein bL17 (117 aa).

This sequence belongs to the bacterial ribosomal protein bL17 family. As to quaternary structure, part of the 50S ribosomal subunit. Contacts protein L32.

The protein is Large ribosomal subunit protein bL17 of Thermomicrobium roseum (strain ATCC 27502 / DSM 5159 / P-2).